We begin with the raw amino-acid sequence, 216 residues long: Transmembrane emp24 domain-containing protein eca (216 aa).

A signal peptide spans 1–20; the sequence is MRDQFISLALILCVLHSACG. Residues 21–182 are Lumenal-facing; sequence LYFHISETER…FRHTSESTNS (162 aa). Residues 30–126 form the GOLD domain; sequence RKCFIEEVPD…QLRVHLDIQV (97 aa). Residues 134–164 are a coiled coil; it reads AHVAQKEKLTELQLRIRQLLDQVEQITKEQN. A helical transmembrane segment spans residues 183 to 203; sequence RVLWWSLAQTVVLVCMGFWQM. Residues 204–216 are Cytoplasmic-facing; it reads RHLKSFFEAKKLV. Residues 213–216 carry the Prevents secretion from ER motif; it reads KKLV.

This sequence belongs to the EMP24/GP25L family.

The protein localises to the endoplasmic reticulum membrane. Functionally, eca and bai are essential, though not redundant, for dorsoventral patterning of the embryo. Specifically required during early embryogenesis for the activity of maternal tkv, while the zygotic tkv is not affected. Involved in Golgi organization. This chain is Transmembrane emp24 domain-containing protein eca, found in Drosophila melanogaster (Fruit fly).